A 79-amino-acid chain; its full sequence is Putative membrane protein insertion efficiency factor (79 aa).

This sequence belongs to the UPF0161 family.

It is found in the cell inner membrane. In terms of biological role, could be involved in insertion of integral membrane proteins into the membrane. This Bacteroides thetaiotaomicron (strain ATCC 29148 / DSM 2079 / JCM 5827 / CCUG 10774 / NCTC 10582 / VPI-5482 / E50) protein is Putative membrane protein insertion efficiency factor.